A 588-amino-acid chain; its full sequence is Arginine--tRNA ligase (588 aa).

The short motif at 126–136 (PNIAKEMHVGH) is the 'HIGH' region element.

Belongs to the class-I aminoacyl-tRNA synthetase family. Monomer.

The protein localises to the cytoplasm. It carries out the reaction tRNA(Arg) + L-arginine + ATP = L-arginyl-tRNA(Arg) + AMP + diphosphate. This chain is Arginine--tRNA ligase, found in Nostoc sp. (strain PCC 7120 / SAG 25.82 / UTEX 2576).